The chain runs to 515 residues: Lysine--tRNA ligase (515 aa).

Mg(2+) contacts are provided by glutamate 425 and glutamate 432.

Belongs to the class-II aminoacyl-tRNA synthetase family. In terms of assembly, homodimer. Mg(2+) serves as cofactor.

It is found in the cytoplasm. The enzyme catalyses tRNA(Lys) + L-lysine + ATP = L-lysyl-tRNA(Lys) + AMP + diphosphate. In Cupriavidus metallidurans (strain ATCC 43123 / DSM 2839 / NBRC 102507 / CH34) (Ralstonia metallidurans), this protein is Lysine--tRNA ligase.